A 548-amino-acid chain; its full sequence is Sesquiterpene synthase TPS1 (548 aa).

(2E,6E)-farnesyl diphosphate contacts are provided by Arg264, Asp301, Asp305, Arg442, and Asp445. Mg(2+) is bound by residues Asp301 and Asp305. Residues 301–305 (DDTYD) carry the DDXXD motif motif. Mg(2+) contacts are provided by Asp445 and Glu453.

Belongs to the terpene synthase family. Tpsa subfamily. Monomer. Mg(2+) is required as a cofactor. Expressed in leaves and stems.

It localises to the cytoplasm. It catalyses the reaction (2E,6E)-farnesyl diphosphate = germacrene D + diphosphate. The catalysed reaction is (2E,6E)-farnesyl diphosphate = (-)-(E)-beta-caryophyllene + diphosphate. The enzyme catalyses (2E,6E)-farnesyl diphosphate = beta-copaene + diphosphate. It functions in the pathway secondary metabolite biosynthesis; terpenoid biosynthesis. Functionally, sesquiterpene synthase involved in the biosynthesis of volatile compounds. Mediates the conversion of (2E,6E)-farnesyl diphosphate (FPP) into germacrene D, (-)-(E)-beta-caryophyllene and beta-copaene. The chain is Sesquiterpene synthase TPS1 from Xanthium strumarium (Rough cocklebur).